Consider the following 574-residue polypeptide: MRTSQYLLSTLKETPSDAEIVSHQLMLRAGMIRKLASGMYAWLPSGLRVLKKIENIVREEMNNAGAIEVSMPVVQPAELWQESGRWDDYGPELCRLTDRHNRPFVLGPTHEEVITSLVRYEVNSYKQLPLNLYQIQTKFRDEVRPRFGVMRGREFLMKDAYSFHIDKASLIETYERMHAAYCAAFTRMGLNFRPVQADTGSIGGTGSHEFQVLAESGEDLIAFSDTSDYAANIEMAEALAPAGERPAATAALTKVATPAVHTIDEVAAFLNVAPAAIAKTLLVLGEEDEHGNQAVIALVLRGDHELNEIKAEKLAGVANPLTFANDEQIKAAAGCDAGSIGPVGFAGRIIADRSAAHLADFVCGANETGFHLTGANWDRDIASYEVADLRNVVEGDPSPCGQGKLLLKRGIEVGHIFQLGTKYSEAMKASVLNEGGKSVTMEMGCYGIGVSRLVAAAIEQNNDQYGIIWPEAIAPFEVAIVPMNMHKSERVAEQAQQFYAELKAAGVDVLFDDRKERPGVMFADMELLGVPHAIVIGDRGLDNGVVEYKCRRTGEKQEVAISEIVALLKAKLGR.

Belongs to the class-II aminoacyl-tRNA synthetase family. ProS type 1 subfamily. Homodimer.

The protein localises to the cytoplasm. The catalysed reaction is tRNA(Pro) + L-proline + ATP = L-prolyl-tRNA(Pro) + AMP + diphosphate. Catalyzes the attachment of proline to tRNA(Pro) in a two-step reaction: proline is first activated by ATP to form Pro-AMP and then transferred to the acceptor end of tRNA(Pro). As ProRS can inadvertently accommodate and process non-cognate amino acids such as alanine and cysteine, to avoid such errors it has two additional distinct editing activities against alanine. One activity is designated as 'pretransfer' editing and involves the tRNA(Pro)-independent hydrolysis of activated Ala-AMP. The other activity is designated 'posttransfer' editing and involves deacylation of mischarged Ala-tRNA(Pro). The misacylated Cys-tRNA(Pro) is not edited by ProRS. In Aeromonas hydrophila subsp. hydrophila (strain ATCC 7966 / DSM 30187 / BCRC 13018 / CCUG 14551 / JCM 1027 / KCTC 2358 / NCIMB 9240 / NCTC 8049), this protein is Proline--tRNA ligase.